Here is a 393-residue protein sequence, read N- to C-terminus: Sulfate adenylyltransferase (393 aa).

Belongs to the sulfate adenylyltransferase family.

The enzyme catalyses sulfate + ATP + H(+) = adenosine 5'-phosphosulfate + diphosphate. It participates in sulfur metabolism; hydrogen sulfide biosynthesis; sulfite from sulfate: step 1/3. This Synechococcus sp. (strain JA-3-3Ab) (Cyanobacteria bacterium Yellowstone A-Prime) protein is Sulfate adenylyltransferase.